The chain runs to 444 residues: tRNA modification GTPase MnmE (444 aa).

Arg-25, Glu-83, and Lys-122 together coordinate (6S)-5-formyl-5,6,7,8-tetrahydrofolate. A TrmE-type G domain is found at 218–370 (GFKVAIVGKP…IVGRLRDYLD (153 aa)). GTP is bound by residues 228–233 (NVGKSS), 247–253 (SDEAGTT), and 272–275 (DTAG). Residues Ser-232 and Thr-253 each contribute to the Mg(2+) site. Residue Lys-444 coordinates (6S)-5-formyl-5,6,7,8-tetrahydrofolate.

The protein belongs to the TRAFAC class TrmE-Era-EngA-EngB-Septin-like GTPase superfamily. TrmE GTPase family. Homodimer. Heterotetramer of two MnmE and two MnmG subunits. The cofactor is K(+).

The protein localises to the cytoplasm. Functionally, exhibits a very high intrinsic GTPase hydrolysis rate. Involved in the addition of a carboxymethylaminomethyl (cmnm) group at the wobble position (U34) of certain tRNAs, forming tRNA-cmnm(5)s(2)U34. The chain is tRNA modification GTPase MnmE from Campylobacter curvus (strain 525.92).